The following is a 420-amino-acid chain: Glutamate dehydrogenase (420 aa).

The active site involves Lys-105. Gly-220 to Tyr-226 contacts NAD(+).

This sequence belongs to the Glu/Leu/Phe/Val dehydrogenases family. As to quaternary structure, homohexamer.

It is found in the cytoplasm. The catalysed reaction is L-glutamate + NAD(+) + H2O = 2-oxoglutarate + NH4(+) + NADH + H(+). It catalyses the reaction L-glutamate + NADP(+) + H2O = 2-oxoglutarate + NH4(+) + NADPH + H(+). The protein is Glutamate dehydrogenase (gdhA) of Pyrococcus horikoshii (strain ATCC 700860 / DSM 12428 / JCM 9974 / NBRC 100139 / OT-3).